Consider the following 1052-residue polypeptide: Eukaryotic translation initiation factor 3 subunit A (1052 aa).

Residues 92 to 121 adopt a coiled-coil conformation; sequence LKKFIELAEKKVTEAQAKADEIQSSLESAA. Positions 339–523 constitute a PCI domain; the sequence is MTKAASFVLL…GVLTFDTDVF (185 aa). Residues 580 to 906 are a coiled coil; it reads EARLQAKRAA…AEARRAARRT (327 aa). Composition is skewed to basic and acidic residues over residues 617–632 and 794–901; these read AATDALQRKQREEETR and KEVS…EARR. Disordered regions lie at residues 617–646 and 794–1052; these read AATDALQRKQREEETRKRIRTQQLQEAEKQ and KEVS…QGGQ. Composition is skewed to low complexity over residues 905-927 and 948-964; these read RTGGAEPEAAPERAAPTERTAPR and KEAAGGTPAAPAAAAPE. A compositionally biased stretch (polar residues) spans 1013–1028; it reads GSSQPPSRTQTPGSSS.

The protein belongs to the eIF-3 subunit A family. As to quaternary structure, component of the eukaryotic translation initiation factor 3 (eIF-3) complex.

It is found in the cytoplasm. RNA-binding component of the eukaryotic translation initiation factor 3 (eIF-3) complex, which is involved in protein synthesis of a specialized repertoire of mRNAs and, together with other initiation factors, stimulates binding of mRNA and methionyl-tRNAi to the 40S ribosome. The eIF-3 complex specifically targets and initiates translation of a subset of mRNAs involved in cell proliferation. In Aspergillus niger (strain ATCC MYA-4892 / CBS 513.88 / FGSC A1513), this protein is Eukaryotic translation initiation factor 3 subunit A (tif32).